We begin with the raw amino-acid sequence, 251 residues long: uncharacterized protein (251 aa).

This is an uncharacterized protein from Homo sapiens (Human).